Reading from the N-terminus, the 606-residue chain is Protein spire homolog 2 (606 aa).

Residues 21-219 enclose the KIND domain; it reads LSLEEVLKSY…RALFLETLEL (199 aa). Residues 147 to 181 form a disordered region; that stretch reads KHCGSNAAKDEGYSGQDEEEEEEEEEEEEGAGRGI. The span at 162–175 shows a compositional bias: acidic residues; it reads QDEEEEEEEEEEEE. 2 WH2 domains span residues 263-277 and 357-374; these read QLMK…LKKV and LHDR…LRPV. Disordered stretches follow at residues 438–464 and 517–537; these read DEDS…RSFS and CRSL…ASHG. A compositionally biased stretch (basic and acidic residues) spans 445–464; it reads VDMRRVESSPTPLKRDRSFS. The spir-box stretch occupies residues 554–574; the sequence is LALTVDGVINVRRILVKAEME.

The protein belongs to the spire family.

It is found in the cytoplasm. The protein localises to the cytoskeleton. The protein resides in the cytosol. It localises to the cell membrane. Its subcellular location is the cytoplasmic vesicle membrane. Acts as an actin nucleation factor, remains associated with the slow-growing pointed end of the new filament. Involved in intracellular vesicle transport along actin fibers, providing a novel link between actin cytoskeleton dynamics and intracellular transport. Required for asymmetric spindle positioning and asymmetric cell division during oocyte meiosis. Required for normal formation of the cleavage furrow and for polar body extrusion during female germ cell meiosis. Also acts in the nucleus: together with SPIRE1 and SPIRE2, promotes assembly of nuclear actin filaments in response to DNA damage in order to facilitate movement of chromatin and repair factors after DNA damage. This Danio rerio (Zebrafish) protein is Protein spire homolog 2 (spire2).